A 361-amino-acid polypeptide reads, in one-letter code: Peptide chain release factor 1 (361 aa).

Q235 carries the post-translational modification N5-methylglutamine.

This sequence belongs to the prokaryotic/mitochondrial release factor family. Methylated by PrmC. Methylation increases the termination efficiency of RF1.

It is found in the cytoplasm. Its function is as follows. Peptide chain release factor 1 directs the termination of translation in response to the peptide chain termination codons UAG and UAA. In Chlamydia felis (strain Fe/C-56) (Chlamydophila felis), this protein is Peptide chain release factor 1.